The chain runs to 314 residues: Olfactory receptor 9I1 (314 aa).

Over 1 to 25 (MAKNNLTRVTEFILMGFMDHPKLEI) the chain is Extracellular. N-linked (GlcNAc...) asparagine glycosylation occurs at asparagine 5. The chain crosses the membrane as a helical span at residues 26–46 (PLFLVFLSFYLVTLLGNVGMI). Topologically, residues 47–54 (MLIQVDVK) are cytoplasmic. The chain crosses the membrane as a helical span at residues 55-75 (LYTPMYFFLSHLSLLDACYTS). The Extracellular segment spans residues 76 to 99 (VITPQILATLATGKTVISYGHCAA). Cysteines 97 and 189 form a disulfide. The helical transmembrane segment at 100-120 (QFFLFTICAGTECFLLAVMAY) threads the bilayer. Residues 121–139 (DRYAAIRNPLLYTVAMNPR) lie on the Cytoplasmic side of the membrane. The chain crosses the membrane as a helical span at residues 140-160 (LCWSLVVGAYVCGVSGAILRT). Residues 161–197 (TCTFTLSFCKDNQINFFFCDLPPLLKLACSDTANIEI) are Extracellular-facing. A helical membrane pass occupies residues 198-217 (VIIFFGNFVILANASVILIS). The Cytoplasmic portion of the chain corresponds to 218–237 (YLLIIKTILKVKSSGGRAKT). Residues 238–258 (FSTCASHITAVALFFGALIFM) form a helical membrane-spanning segment. Topologically, residues 259–271 (YLQSGSGKSLEED) are extracellular. The helical transmembrane segment at 272–292 (KVVSVFYTVVIPMLNPLIYSL) threads the bilayer. Residues 293–314 (RNKDVKDAFRKVARRLQVSLSM) lie on the Cytoplasmic side of the membrane.

The protein belongs to the G-protein coupled receptor 1 family.

Its subcellular location is the cell membrane. Functionally, odorant receptor. In Homo sapiens (Human), this protein is Olfactory receptor 9I1 (OR9I1).